The following is a 474-amino-acid chain: 3-isopropylmalate dehydratase large subunit (474 aa).

[4Fe-4S] cluster contacts are provided by C355, C415, and C418.

Belongs to the aconitase/IPM isomerase family. LeuC type 1 subfamily. Heterodimer of LeuC and LeuD. Requires [4Fe-4S] cluster as cofactor.

The catalysed reaction is (2R,3S)-3-isopropylmalate = (2S)-2-isopropylmalate. The protein operates within amino-acid biosynthesis; L-leucine biosynthesis; L-leucine from 3-methyl-2-oxobutanoate: step 2/4. Its function is as follows. Catalyzes the isomerization between 2-isopropylmalate and 3-isopropylmalate, via the formation of 2-isopropylmaleate. This chain is 3-isopropylmalate dehydratase large subunit, found in Shewanella sp. (strain ANA-3).